Reading from the N-terminus, the 630-residue chain is Mannosyl-oligosaccharide 1,2-alpha-mannosidase IC (630 aa).

Residues 1 to 22 (MLMRKVPGFVPASPWGLRLPQK) lie on the Cytoplasmic side of the membrane. The chain crosses the membrane as a helical; Signal-anchor for type II membrane protein span at residues 23 to 43 (FLFLLFLSGLVTLCFGALFLL). Residues 44–630 (PHSSRLKRLF…DSSGRAWGRH (587 aa)) lie on the Lumenal side of the membrane. Positions 74-140 (PAREQEPPPN…ASRPGDEGVP (67 aa)) are disordered. Pro residues predominate over residues 80–89 (PPPNPAPAAP). Basic residues predominate over residues 102-113 (PRRRKGGLRRTR). Ser164 carries the post-translational modification Phosphoserine. Asn250 carries N-linked (GlcNAc...) asparagine glycosylation. Cysteines 453 and 485 form a disulfide. The active-site Proton donor is Glu499. Thr610 contacts Ca(2+). A glycan (N-linked (GlcNAc...) asparagine) is linked at Asn618.

Belongs to the glycosyl hydrolase 47 family. Requires Ca(2+) as cofactor. As to expression, expressed in most tissues with the exception of lung, muscle and pancreas. Highly expressed in placenta.

The protein localises to the golgi apparatus membrane. It carries out the reaction N(4)-(alpha-D-Man-(1-&gt;2)-alpha-D-Man-(1-&gt;2)-alpha-D-Man-(1-&gt;3)-[alpha-D-Man-(1-&gt;2)-alpha-D-Man-(1-&gt;3)-[alpha-D-Man-(1-&gt;2)-alpha-D-Man-(1-&gt;6)]-alpha-D-Man-(1-&gt;6)]-beta-D-Man-(1-&gt;4)-beta-D-GlcNAc-(1-&gt;4)-beta-D-GlcNAc)-L-asparaginyl-[protein] (N-glucan mannose isomer 9A1,2,3B1,2,3) + 4 H2O = N(4)-(alpha-D-Man-(1-&gt;3)-[alpha-D-Man-(1-&gt;3)-[alpha-D-Man-(1-&gt;6)]-alpha-D-Man-(1-&gt;6)]-beta-D-Man-(1-&gt;4)-beta-D-GlcNAc-(1-&gt;4)-beta-D-GlcNAc)-L-asparaginyl-[protein] (N-glucan mannose isomer 5A1,2) + 4 beta-D-mannose. The enzyme catalyses N(4)-(alpha-D-Man-(1-&gt;2)-alpha-D-Man-(1-&gt;2)-alpha-D-Man-(1-&gt;3)-[alpha-D-Man-(1-&gt;3)-[alpha-D-Man-(1-&gt;2)-alpha-D-Man-(1-&gt;6)]-alpha-D-Man-(1-&gt;6)]-beta-D-Man-(1-&gt;4)-beta-D-GlcNAc-(1-&gt;4)-beta-D-GlcNAc)-L-asparaginyl-[protein] (N-glucan mannose isomer 8A1,2,3B1,3) + 3 H2O = N(4)-(alpha-D-Man-(1-&gt;3)-[alpha-D-Man-(1-&gt;3)-[alpha-D-Man-(1-&gt;6)]-alpha-D-Man-(1-&gt;6)]-beta-D-Man-(1-&gt;4)-beta-D-GlcNAc-(1-&gt;4)-beta-D-GlcNAc)-L-asparaginyl-[protein] (N-glucan mannose isomer 5A1,2) + 3 beta-D-mannose. Its pathway is protein modification; protein glycosylation. Its activity is regulated as follows. Inhibited by both 1-deoxymannojirimycin and kifunensine. In terms of biological role, involved in the maturation of Asn-linked oligosaccharides. Trim alpha-1,2-linked mannose residues from Man(9)GlcNAc(2) to produce first Man(8)GlcNAc(2) then Man(6)GlcNAc and a small amount of Man(5)GlcNAc. The polypeptide is Mannosyl-oligosaccharide 1,2-alpha-mannosidase IC (MAN1C1) (Homo sapiens (Human)).